Consider the following 981-residue polypeptide: Echinoderm microtubule-associated protein-like 4 (981 aa).

The residue at position 1 (Met1) is an N-acetylmethionine. 2 disordered regions span residues 1–20 (MDGF…TSDV) and 57–205 (DHVA…PKLI). The microtubule-binding stretch occupies residues 1–249 (MDGFAGSLDD…IPSDVDNYDD (249 aa)). 4 positions are modified to phosphoserine: Ser7, Ser13, Ser16, and Ser61. A coiled-coil region spans residues 14–63 (AASTSDVQDRLSALESRVQQQEDEITVLKAALADVLRRLAISEDHVASVK). Thr96 bears the Phosphothreonine mark. Over residues 114–134 (GTEKKKEKPQGQREKKEESHS) the composition is skewed to basic and acidic residues. A Phosphoserine; by NEK7 modification is found at Ser134. Residues 137-155 (QSPQIRASPSPQPSSQPLQ) are compositionally biased toward low complexity. Ser144 bears the Phosphoserine; by NEK6 mark. The residue at position 146 (Ser146) is a Phosphoserine; by NEK7. Ser171 is modified (phosphoserine). A compositionally biased stretch (basic and acidic residues) spans 176–193 (SPAEKSHNSWENSDDSRN). Ser200 carries the phosphoserine modification. Residue Thr201 is modified to Phosphothreonine. At Tyr226 the chain carries Phosphotyrosine. Thr237 carries the phosphothreonine modification. WD repeat units lie at residues 259-297 (LKLE…LFNY), 301-348 (TQRH…VWDS), 356-396 (IIGL…VWDW), 403-438 (AEIK…FWTW), and 445-484 (RKQG…IWSK). Phosphothreonine; by NEK6 is present on Thr490. 8 WD repeats span residues 500-538 (QISK…LWDH), 543-579 (EREI…LRGT), 582-621 (DGFQ…LWNS), 625-662 (RLEW…VLDA), 668-704 (VSIH…LYVV), 711-750 (YSRY…YWDI), 760-818 (RSDC…LFQY), and 825-864 (APSH…QWKL). Thr609 is modified (phosphothreonine; by NEK6 and NEK7). Residues 881–893 (LTKAPVSSTESVI) show a composition bias toward polar residues. A disordered region spans residues 881–981 (LTKAPVSSTE…EDQQDPSPSS (101 aa)). Phosphoserine occurs at positions 891 and 895. Residues Thr897 and Thr899 each carry the phosphothreonine modification. Ser903 bears the Phosphoserine mark. Residues 916–931 (ISSSPTLLENSLEQTV) show a composition bias toward polar residues. Residues 937 to 946 (HSEEESEEGS) show a composition bias toward acidic residues. Ser978 carries the phosphoserine modification. A Phosphoserine; by NEK6 and NEK7 modification is found at Ser981.

Belongs to the WD repeat EMAP family. In terms of assembly, homotrimer; self-association is mediated by the N-terminal coiled coil. Interacts (via WD repeats) with NUDC. Interacts with alpha- and beta-tubulin during mitosis. In terms of processing, phosphorylated during mitosis. Phosphorylation at Ser-144 and Ser-146 promotes its dissociation from microtubules during mitosis which is required for efficient chromosome congression.

The protein resides in the cytoplasm. It localises to the cytoskeleton. It is found in the spindle. Its subcellular location is the microtubule organizing center. The protein localises to the midbody. In terms of biological role, essential for the formation and stability of microtubules (MTs). Required for the organization of the mitotic spindle and for the proper attachment of kinetochores to MTs. Promotes the recruitment of NUDC to the mitotic spindle for mitotic progression. In Homo sapiens (Human), this protein is Echinoderm microtubule-associated protein-like 4 (EML4).